We begin with the raw amino-acid sequence, 440 residues long: Ribulose bisphosphate carboxylase large chain (440 aa).

Position 4 is an N6,N6,N6-trimethyllysine (Lys4). Asn113 and Thr163 together coordinate substrate. Lys165 (proton acceptor) is an active-site residue. Lys167 is a substrate binding site. Positions 191, 193, and 194 each coordinate Mg(2+). Lys191 is subject to N6-carboxylysine. The Proton acceptor role is filled by His284. 3 residues coordinate substrate: Arg285, His317, and Ser369.

This sequence belongs to the RuBisCO large chain family. Type I subfamily. Heterohexadecamer of 8 large chains and 8 small chains; disulfide-linked. The disulfide link is formed within the large subunit homodimers. It depends on Mg(2+) as a cofactor. In terms of processing, the disulfide bond which can form in the large chain dimeric partners within the hexadecamer appears to be associated with oxidative stress and protein turnover.

The protein resides in the plastid. It localises to the chloroplast. The catalysed reaction is 2 (2R)-3-phosphoglycerate + 2 H(+) = D-ribulose 1,5-bisphosphate + CO2 + H2O. The enzyme catalyses D-ribulose 1,5-bisphosphate + O2 = 2-phosphoglycolate + (2R)-3-phosphoglycerate + 2 H(+). Functionally, ruBisCO catalyzes two reactions: the carboxylation of D-ribulose 1,5-bisphosphate, the primary event in carbon dioxide fixation, as well as the oxidative fragmentation of the pentose substrate in the photorespiration process. Both reactions occur simultaneously and in competition at the same active site. The protein is Ribulose bisphosphate carboxylase large chain of Dicksonia antarctica (Australian tree fern).